A 40-amino-acid chain; its full sequence is Conotoxin Bt14.16 (40 aa).

Positions 1-18 (SDGRDAAVIYTESDVIAR) are excised as a propeptide. Cystine bridges form between cysteine 21–cysteine 36 and cysteine 24–cysteine 29.

The protein belongs to the conotoxin A superfamily. Expressed by the venom duct.

It is found in the secreted. Probable neurotoxin with unknown target. Possibly targets ion channels. This is Conotoxin Bt14.16 from Conus betulinus (Beech cone).